The chain runs to 294 residues: Flavin-dependent thymidylate synthase (294 aa).

Residues 27-250 (GFIRVIDYMG…PFTYEAFEEY (224 aa)) enclose the ThyX domain. Residues threonine 73, 96–98 (RHR), and glutamate 104 contribute to the FAD site. DUMP contacts are provided by residues 93 to 96 (QWIR), 104 to 108 (EYSAR), and arginine 189. A ThyX motif motif is present at residues 96-106 (RHRTASVNEYS). FAD is bound by residues 205–207 (NLH) and histidine 211. Position 216 (arginine 216) interacts with dUMP. Arginine 216 serves as the catalytic Involved in ionization of N3 of dUMP, leading to its activation.

Belongs to the thymidylate synthase ThyX family. In terms of assembly, homotetramer. It depends on FAD as a cofactor.

It carries out the reaction dUMP + (6R)-5,10-methylene-5,6,7,8-tetrahydrofolate + NADPH + H(+) = dTMP + (6S)-5,6,7,8-tetrahydrofolate + NADP(+). It participates in pyrimidine metabolism; dTTP biosynthesis. In terms of biological role, catalyzes the reductive methylation of 2'-deoxyuridine-5'-monophosphate (dUMP) to 2'-deoxythymidine-5'-monophosphate (dTMP) while utilizing 5,10-methylenetetrahydrofolate (mTHF) as the methyl donor, and NADPH and FADH(2) as the reductant. This chain is Flavin-dependent thymidylate synthase, found in Rickettsia prowazekii (strain Madrid E).